The following is a 142-amino-acid chain: Transcriptional regulator MraZ (142 aa).

2 SpoVT-AbrB domains span residues 5 to 47 (EYNH…PMEE) and 76 to 119 (ANEI…SREK).

It belongs to the MraZ family. Forms oligomers.

The protein localises to the cytoplasm. Its subcellular location is the nucleoid. The sequence is that of Transcriptional regulator MraZ from Clostridium tetani (strain Massachusetts / E88).